The chain runs to 425 residues: Inositol hexakisphosphate kinase 2 (425 aa).

Residues 206–208 (ENL) and D219 contribute to the ATP site. Substrate-binding positions include 215–223 (PCVLDLKMG), K221, and 235–242 (KAANQIRK). An ATP-binding site is contributed by D382. H385 serves as a coordination point for substrate.

The protein belongs to the inositol phosphokinase (IPK) family. Highly expressed in small intestine.

It localises to the nucleus. It catalyses the reaction 1D-myo-inositol hexakisphosphate + ATP = 5-diphospho-1D-myo-inositol 1,2,3,4,6-pentakisphosphate + ADP. It functions in the pathway phospholipid metabolism; phosphatidylinositol metabolism. In terms of biological role, converts inositol hexakisphosphate (InsP6) to diphosphoinositol pentakisphosphate (InsP7/PP-InsP5). The protein is Inositol hexakisphosphate kinase 2 (Ip6k2) of Rattus norvegicus (Rat).